A 344-amino-acid chain; its full sequence is Type VI secretion system component TssA1 (344 aa).

Homododecamer. Interacts with TssB1 and TssC1. Interacts with TssK1 and TssF1.

In terms of biological role, core component of the H1 type VI (H1-T6SS) secretion system that plays a role in the release of toxins targeting both eukaryotic and prokaryotic species. Forms a dodecameric ring-shaped structure located at one end of the T6SS sheath. May properly attach the pre-assembled sheath onto the baseplate and/or stabilize the sheaths tubular structure. This is Type VI secretion system component TssA1 from Pseudomonas aeruginosa (strain ATCC 15692 / DSM 22644 / CIP 104116 / JCM 14847 / LMG 12228 / 1C / PRS 101 / PAO1).